The primary structure comprises 371 residues: N-acetyldiaminopimelate deacetylase (371 aa).

Aspartate 68 is an active-site residue. Catalysis depends on glutamate 127, which acts as the Proton acceptor.

This sequence belongs to the peptidase M20A family. N-acetyldiaminopimelate deacetylase subfamily.

It catalyses the reaction N-acetyl-(2S,6S)-2,6-diaminopimelate + H2O = (2S,6S)-2,6-diaminopimelate + acetate. It functions in the pathway amino-acid biosynthesis; L-lysine biosynthesis via DAP pathway; LL-2,6-diaminopimelate from (S)-tetrahydrodipicolinate (acetylase route): step 3/3. Catalyzes the conversion of N-acetyl-diaminopimelate to diaminopimelate and acetate. This Listeria innocua serovar 6a (strain ATCC BAA-680 / CLIP 11262) protein is N-acetyldiaminopimelate deacetylase.